The following is a 295-amino-acid chain: Energy-coupling factor transporter ATP-binding protein EcfA2 (295 aa).

An ABC transporter domain is found at 3–246 (ITFKQVDFTY…PAWLTAHQLG (244 aa)). 40–47 (GHTGSGKS) is a binding site for ATP.

The protein belongs to the ABC transporter superfamily. Energy-coupling factor EcfA family. In terms of assembly, forms a stable energy-coupling factor (ECF) transporter complex composed of 2 membrane-embedded substrate-binding proteins (S component), 2 ATP-binding proteins (A component) and 2 transmembrane proteins (T component).

The protein resides in the cell membrane. In terms of biological role, ATP-binding (A) component of a common energy-coupling factor (ECF) ABC-transporter complex. Unlike classic ABC transporters this ECF transporter provides the energy necessary to transport a number of different substrates. The protein is Energy-coupling factor transporter ATP-binding protein EcfA2 of Lactiplantibacillus plantarum (strain ATCC BAA-793 / NCIMB 8826 / WCFS1) (Lactobacillus plantarum).